The following is a 120-amino-acid chain: Large ribosomal subunit protein uL18 (120 aa).

Belongs to the universal ribosomal protein uL18 family. As to quaternary structure, part of the 50S ribosomal subunit; part of the 5S rRNA/L5/L18/L25 subcomplex. Contacts the 5S and 23S rRNAs.

Its function is as follows. This is one of the proteins that bind and probably mediate the attachment of the 5S RNA into the large ribosomal subunit, where it forms part of the central protuberance. This chain is Large ribosomal subunit protein uL18, found in Rhodopseudomonas palustris (strain BisA53).